A 368-amino-acid polypeptide reads, in one-letter code: Methylthioribose-1-phosphate isomerase (368 aa).

Residues 54–56 (RGA), Arg-91, and Gln-204 contribute to the substrate site. The Proton donor role is filled by Asp-245. Substrate is bound at residue 255-256 (NK).

The protein belongs to the eIF-2B alpha/beta/delta subunits family. MtnA subfamily.

The catalysed reaction is 5-(methylsulfanyl)-alpha-D-ribose 1-phosphate = 5-(methylsulfanyl)-D-ribulose 1-phosphate. Its pathway is amino-acid biosynthesis; L-methionine biosynthesis via salvage pathway; L-methionine from S-methyl-5-thio-alpha-D-ribose 1-phosphate: step 1/6. In terms of biological role, catalyzes the interconversion of methylthioribose-1-phosphate (MTR-1-P) into methylthioribulose-1-phosphate (MTRu-1-P). The chain is Methylthioribose-1-phosphate isomerase from Gluconobacter oxydans (strain 621H) (Gluconobacter suboxydans).